The chain runs to 375 residues: Cell division protein ZapE (375 aa).

78-85 is an ATP binding site; that stretch reads GGVGRGKT.

The protein belongs to the AFG1 ATPase family. ZapE subfamily. In terms of assembly, interacts with FtsZ.

Its subcellular location is the cytoplasm. In terms of biological role, reduces the stability of FtsZ polymers in the presence of ATP. This Escherichia coli O157:H7 protein is Cell division protein ZapE.